The primary structure comprises 247 residues: ATP synthase subunit a, chloroplastic (247 aa).

A run of 5 helical transmembrane segments spans residues 36–56, 95–115, 134–154, 199–219, and 220–240; these read GQVLMTSWFVFAVIAILSIAG, IPFLGTLFLFIFVSNWSGALI, INTTVALALLTSTAYFYAGFS, LVVGVLVALVPLVVPIPIMLL, and GLFTSGIQALVFATLAGAYIG.

The protein belongs to the ATPase A chain family. In terms of assembly, F-type ATPases have 2 components, CF(1) - the catalytic core - and CF(0) - the membrane proton channel. CF(1) has five subunits: alpha(3), beta(3), gamma(1), delta(1), epsilon(1). CF(0) has four main subunits: a, b, b' and c.

The protein resides in the plastid. It is found in the chloroplast thylakoid membrane. In terms of biological role, key component of the proton channel; it plays a direct role in the translocation of protons across the membrane. This Tupiella akineta (Green alga) protein is ATP synthase subunit a, chloroplastic.